Consider the following 276-residue polypeptide: Rhamnulose-1-phosphate aldolase (276 aa).

The active site involves Glu117. His141, His143, and His212 together coordinate Zn(2+).

This sequence belongs to the aldolase class II family. RhaD subfamily. As to quaternary structure, homotetramer. It depends on Zn(2+) as a cofactor.

The protein localises to the cytoplasm. The enzyme catalyses L-rhamnulose 1-phosphate = (S)-lactaldehyde + dihydroxyacetone phosphate. It participates in carbohydrate degradation; L-rhamnose degradation; glycerone phosphate from L-rhamnose: step 3/3. Functionally, catalyzes the reversible cleavage of L-rhamnulose-1-phosphate to dihydroxyacetone phosphate (DHAP) and L-lactaldehyde. The chain is Rhamnulose-1-phosphate aldolase from Klebsiella pneumoniae (strain 342).